Here is a 564-residue protein sequence, read N- to C-terminus: Dihydropyrimidinase-related protein 5 (564 aa).

Residues T509 and T514 each carry the phosphothreonine modification. Phosphoserine occurs at positions 532 and 538. R559 carries the omega-N-methylarginine modification.

Belongs to the metallo-dependent hydrolases superfamily. Hydantoinase/dihydropyrimidinase family. In terms of assembly, homotetramer, and heterotetramer with other DPYS-like proteins. Interacts with DPYSL2, DPYSL3 and DPYSL4. Interacts with MAP2 and TUBB3. As to expression, highly expressed in embryonic and early postnatal brain and spinal cord.

Its subcellular location is the cytoplasm. Functionally, involved in the negative regulation of dendrite outgrowth. This chain is Dihydropyrimidinase-related protein 5 (Dpysl5), found in Rattus norvegicus (Rat).